A 173-amino-acid polypeptide reads, in one-letter code: MDVTIQHPWFKRALGPFYPSRLLDQFFGEGLFEYDLLPFLSSTISPYYRQSLFRTVLDSGISEVRSDRDKFVIFLDVKHFSPEDLTVKVLEDFVEIHGKHSERQDDHGYISREFHRRYRLPPSVDQAALSCSLSADGMLTFSGPKVASGLDAGPSERAIPVSREEKPSSAPSS.

M1 bears the N-acetylmethionine mark. Positions 1–63 (MDVTIQHPWF…RTVLDSGISE (63 aa)) are required for complex formation with BFSP1 and BFSP2. A Deamidated glutamine; partial modification is found at Q6. Position 45 is a phosphoserine (S45). Q50 carries the deamidated glutamine; partial modification. Residues 52–162 (LFRTVLDSGI…GPSERAIPVS (111 aa)) form the sHSP domain. N6-acetyllysine occurs at positions 70 and 99. Positions 100, 102, and 107 each coordinate Zn(2+). Residues 145-173 (KVASGLDAGPSERAIPVSREEKPSSAPSS) form a disordered region. S162 is a glycosylation site (O-linked (GlcNAc) serine).

This sequence belongs to the small heat shock protein (HSP20) family. As to quaternary structure, heteromer composed of three CRYAA and one CRYAB subunits. Zinc coordination is achieved at least by His-100, Glu-102 and His-107. His-100 and Glu-102 come from the same molecule within the oligomer, while His-107 residue is provided by another molecule. Inter-subunit bridging via zinc ions enhances stability, which is crucial as there is no protein turn over in the lens. Can also form homodimers and homotetramers (dimers of dimers) which serve as the building blocks of homooligomers. Part of a complex required for lens intermediate filament formation composed of BFSP1, BFSP2 and CRYAA. Post-translationally, acetylation at Lys-70 may increase chaperone activity. In terms of processing, undergoes age-dependent proteolytical cleavage at the C-terminus.

The protein resides in the cytoplasm. It localises to the nucleus. In terms of biological role, contributes to the transparency and refractive index of the lens. Acts as a chaperone, preventing aggregation of various proteins under a wide range of stress conditions. Required for the correct formation of lens intermediate filaments as part of a complex composed of BFSP1, BFSP2 and CRYAA. The protein is Alpha-crystallin A chain (CRYAA) of Erinaceus europaeus (Western European hedgehog).